Here is a 254-residue protein sequence, read N- to C-terminus: MNIKISEITKELELVGEGGFFGVKDKYGTDEREGVKKLLFKYENRYEKLNAERARVRFLQEYELSYPDYRYICGIDEVGRGPLAGPVIACAVILPKDCEILYINDSKQLSEKKREALYDEIMEKAISVGIGSASHARIEEINILQATYEAMRGAINKLGVVPELLLNDAVTIPKVVIPQVPIIKGDAKSISIAAASIVAKVTRDRLMVEYDTVFPGYGFASNKGYGSADHIKALKELGPSPIHRASFIKNLTSC.

One can recognise an RNase H type-2 domain in the interval 70 to 254 (RYICGIDEVG…ASFIKNLTSC (185 aa)). Residues aspartate 76, glutamate 77, and aspartate 168 each contribute to the a divalent metal cation site.

This sequence belongs to the RNase HII family. Mn(2+) serves as cofactor. The cofactor is Mg(2+).

The protein localises to the cytoplasm. It carries out the reaction Endonucleolytic cleavage to 5'-phosphomonoester.. Endonuclease that specifically degrades the RNA of RNA-DNA hybrids. This chain is Ribonuclease HII, found in Lachnoclostridium phytofermentans (strain ATCC 700394 / DSM 18823 / ISDg) (Clostridium phytofermentans).